The primary structure comprises 249 residues: Serine 3-dehydrogenase (249 aa).

Residue 6 to 30 (LITGATSGFGQATAQRFVKEGWKVI) coordinates NADP(+). S135 contributes to the substrate binding site. Residue Y148 is the Proton acceptor of the active site.

The protein belongs to the short-chain dehydrogenases/reductases (SDR) family. As to quaternary structure, homotetramer.

The catalysed reaction is L-serine + NADP(+) = aminoacetaldehyde + CO2 + NADPH. Catalyzes the oxidation of the hydroxyl group of serine to form 2-aminomalonate semialdehyde which is spontaneously converted into 2-aminoacetaldehyde and CO(2). Also acts on D-serine, L-glycerate, D-glycerate and 2-methyl-DL-serine. Does not act on O-methyl-DL-serine and L-threonine. The polypeptide is Serine 3-dehydrogenase (sdh) (Rhizobium radiobacter (Agrobacterium tumefaciens)).